Consider the following 138-residue polypeptide: Acidic phospholipase A2 BmooPLA2 (138 aa).

Residues 1-16 (MRTLWIVAVLLLGVEG) form the signal peptide. Cystine bridges form between Cys42–Cys131, Cys44–Cys60, Cys59–Cys111, Cys65–Cys138, Cys66–Cys104, Cys73–Cys97, and Cys91–Cys102. Residues Tyr43, Gly45, and Gly47 each contribute to the Ca(2+) site. His63 is a catalytic residue. Ca(2+) is bound at residue Asp64. Asp105 is a catalytic residue.

This sequence belongs to the phospholipase A2 family. Group II subfamily. D49 sub-subfamily. Ca(2+) serves as cofactor. Expressed by the venom gland.

The protein localises to the secreted. The enzyme catalyses a 1,2-diacyl-sn-glycero-3-phosphocholine + H2O = a 1-acyl-sn-glycero-3-phosphocholine + a fatty acid + H(+). Snake venom phospholipase A2 (PLA2) that inhibits ADP- and collagen-induced platelet aggregation, has edema-inducing, anti-coagulant activity, antibacterial activity, and cytotoxic activity. In vivo, has a hypotensive effect. PLA2 catalyzes the calcium-dependent hydrolysis of the 2-acyl groups in 3-sn-phosphoglycerides. This chain is Acidic phospholipase A2 BmooPLA2, found in Bothrops moojeni (Lance-headed viper).